Consider the following 584-residue polypeptide: Protein DENND6A (584 aa).

The interval M1–E23 is disordered. The uDENN domain occupies H39 to K218. A cDENN domain is found at E244–K369. A dDENN domain is found at L371–N504.

Belongs to the DENND6 family.

The protein localises to the recycling endosome. It is found in the cytoplasm. Its function is as follows. Guanine nucleotide exchange factor (GEF) for RAB14. This is Protein DENND6A (DENND6A) from Gallus gallus (Chicken).